Consider the following 507-residue polypeptide: Protein DETOXIFICATION 39 (507 aa).

Transmembrane regions (helical) follow at residues 58 to 78 (VLFR…GMGI), 92 to 112 (LAAA…MLGM), 141 to 161 (IVLA…YPIL), 178 to 198 (IAGL…QKFL), 209 to 229 (FISA…VYVM), 233 to 253 (FMGI…SQCF), 287 to 307 (AVMI…AGLL), 318 to 338 (SICM…NAAV), 359 to 379 (WTAT…VIWF), 403 to 423 (FLAI…VAVG), 433 to 453 (VNVG…GFTF), and 459 to 479 (GIWT…LYVT).

Belongs to the multi antimicrobial extrusion (MATE) (TC 2.A.66.1) family.

Its subcellular location is the membrane. This is Protein DETOXIFICATION 39 from Arabidopsis thaliana (Mouse-ear cress).